We begin with the raw amino-acid sequence, 290 residues long: Probable lipid hydrolase 463L (290 aa).

Helical transmembrane passes span 26 to 46 and 53 to 73; these read TLVL…LNGL and ISTF…SIGY. The PNPLA domain maps to 27 to 207; that stretch reads LVLSGGAMRG…WNNFPIDIAI (181 aa). Residues 58–62 carry the GXSXG motif; sequence GISSG. S60 (nucleophile) is an active-site residue. The Proton acceptor role is filled by D194. Residues 194–196 carry the DGA/G motif; sequence DGG.

It localises to the membrane. Its function is as follows. Probable lipid hydrolase. The sequence is that of Probable lipid hydrolase 463L from Invertebrate iridescent virus 6 (IIV-6).